The sequence spans 390 residues: 1-acyl-sn-glycerol-3-phosphate acyltransferase 2 (390 aa).

Residues 2-22 (AMAAAVIVPLGILFFISGLVV) form a helical membrane-spanning segment. An HXXXXD motif motif is present at residues 91–96 (HRSDID). Helical transmembrane passes span 305–325 (LAVVVSWACLLTLGAMKFLHW) and 333–353 (KGIALSAFGLGIITLCMQILI). Positions 358 to 390 (SERSTPAKVAPAKPKDNHQSGPSSQTEVEEKQK) are disordered.

This sequence belongs to the 1-acyl-sn-glycerol-3-phosphate acyltransferase family.

It localises to the endoplasmic reticulum membrane. The catalysed reaction is a 1-acyl-sn-glycero-3-phosphate + an acyl-CoA = a 1,2-diacyl-sn-glycero-3-phosphate + CoA. It functions in the pathway phospholipid metabolism; CDP-diacylglycerol biosynthesis; CDP-diacylglycerol from sn-glycerol 3-phosphate: step 2/3. In terms of biological role, converts lysophosphatidic acid (LPA) into phosphatidic acid by incorporating acyl moiety at the 2 position. This is 1-acyl-sn-glycerol-3-phosphate acyltransferase 2 (LPAT2) from Brassica napus (Rape).